A 667-amino-acid polypeptide reads, in one-letter code: UvrABC system protein B (667 aa).

The Helicase ATP-binding domain maps to 25–414; the sequence is TGLQRGDKHQ…GVVVEQIIRP (390 aa). Residue 38–45 participates in ATP binding; it reads GVTGSGKT. The short motif at 91-114 is the Beta-hairpin element; sequence YYDYYQPEAYVPTTDTFIEKDSSI. In terms of domain architecture, Helicase C-terminal spans 430-596; sequence QVDDLIHEIR…TVKKSLRSIL (167 aa). Residues 624-659 form the UVR domain; sequence KNEIARVKEEMLAAAANLEFEKAAELRDRMLELDKL.

This sequence belongs to the UvrB family. As to quaternary structure, forms a heterotetramer with UvrA during the search for lesions. Interacts with UvrC in an incision complex.

It is found in the cytoplasm. In terms of biological role, the UvrABC repair system catalyzes the recognition and processing of DNA lesions. A damage recognition complex composed of 2 UvrA and 2 UvrB subunits scans DNA for abnormalities. Upon binding of the UvrA(2)B(2) complex to a putative damaged site, the DNA wraps around one UvrB monomer. DNA wrap is dependent on ATP binding by UvrB and probably causes local melting of the DNA helix, facilitating insertion of UvrB beta-hairpin between the DNA strands. Then UvrB probes one DNA strand for the presence of a lesion. If a lesion is found the UvrA subunits dissociate and the UvrB-DNA preincision complex is formed. This complex is subsequently bound by UvrC and the second UvrB is released. If no lesion is found, the DNA wraps around the other UvrB subunit that will check the other stand for damage. The chain is UvrABC system protein B from Syntrophotalea carbinolica (strain DSM 2380 / NBRC 103641 / GraBd1) (Pelobacter carbinolicus).